The primary structure comprises 276 residues: Undecaprenyl-diphosphatase 1 (276 aa).

6 consecutive transmembrane segments (helical) span residues 43–63, 85–105, 109–129, 184–204, 214–234, and 254–274; these read RAMA…VWEF, ANLL…ADLI, LFNP…MLWA, ATEF…VYSG, ADFP…MIAV, and IVFG…WTAA.

It belongs to the UppP family.

Its subcellular location is the cell inner membrane. It carries out the reaction di-trans,octa-cis-undecaprenyl diphosphate + H2O = di-trans,octa-cis-undecaprenyl phosphate + phosphate + H(+). Functionally, catalyzes the dephosphorylation of undecaprenyl diphosphate (UPP). Confers resistance to bacitracin. The polypeptide is Undecaprenyl-diphosphatase 1 (Pseudomonas fluorescens (strain Pf0-1)).